The sequence spans 297 residues: 4-hydroxy-tetrahydrodipicolinate synthase (297 aa).

Thr-47 is a pyruvate binding site. Tyr-135 (proton donor/acceptor) is an active-site residue. Lys-163 (schiff-base intermediate with substrate) is an active-site residue. Pyruvate is bound at residue Ile-205.

Belongs to the DapA family. Homotetramer; dimer of dimers.

The protein localises to the cytoplasm. It carries out the reaction L-aspartate 4-semialdehyde + pyruvate = (2S,4S)-4-hydroxy-2,3,4,5-tetrahydrodipicolinate + H2O + H(+). It participates in amino-acid biosynthesis; L-lysine biosynthesis via DAP pathway; (S)-tetrahydrodipicolinate from L-aspartate: step 3/4. Catalyzes the condensation of (S)-aspartate-beta-semialdehyde [(S)-ASA] and pyruvate to 4-hydroxy-tetrahydrodipicolinate (HTPA). This chain is 4-hydroxy-tetrahydrodipicolinate synthase, found in Dehalococcoides mccartyi (strain ATCC BAA-2266 / KCTC 15142 / 195) (Dehalococcoides ethenogenes (strain 195)).